An 878-amino-acid chain; its full sequence is F-box DNA helicase protein 1 (878 aa).

The region spanning 8–56 (SCKFYRLPLEIIPLICRFLSVQDIQSFIRVFPSFQTILDSSNDLFWKKK) is the F-box domain.

Belongs to the helicase family. UvrD subfamily. In terms of assembly, part of the E3 ubiquitin ligase Skp1-Cullin-1-F-box (SCF) complex. Interacts with skp1 and ssb1. It depends on Mg(2+) as a cofactor. Mn(2+) is required as a cofactor.

It is found in the cytoplasm. Its subcellular location is the nucleus. It catalyses the reaction Couples ATP hydrolysis with the unwinding of duplex DNA by translocating in the 3'-5' direction.. It carries out the reaction ATP + H2O = ADP + phosphate + H(+). Its pathway is protein modification; protein ubiquitination. In terms of biological role, involved in ATP-dependent DNA-unwinding in a 3' to 5' direction, and ATP-ase activities stimulated by the single-stranded DNA-binding protein ssb1. Essential for viability and normal growth of stationary phase cells and in the absence of either srs2 or rqh1 DNA helicase. Involved in DNA recombination repair of strand breaks and stalled or collapsed replication forks, on the rhp51-dependent pathway: promotes rhp51 filament dissolution from stalled forks, thereby inhibiting homologous recombination and preventing excessive recombination. Ubiquitination and DNA helicase activities are essential for controlling rhp51-dependent recombination in the absence of rad22. Plays a role in the processing of toxic recombination intermediates. Promotes proper chromosome segregation. The sequence is that of F-box DNA helicase protein 1 (fbh1) from Schizosaccharomyces pombe (strain 972 / ATCC 24843) (Fission yeast).